Consider the following 111-residue polypeptide: Gene 21 protein (111 aa).

The polypeptide is Gene 21 protein (21) (Mycobacterium phage D29 (Mycobacteriophage D29)).